Here is a 141-residue protein sequence, read N- to C-terminus: Large ribosomal subunit protein mL42 (141 aa).

The N-terminal 31 residues, 1–31 (MTAAVKWAVSHRTIWRHLFPIQNGAISSACH), are a transit peptide targeting the mitochondrion.

Belongs to the mitochondrion-specific ribosomal protein mL42 family. In terms of assembly, component of the mitochondrial ribosome large subunit (39S) which comprises a 16S rRNA and about 50 distinct proteins. Component of the mitochondrial ribosome small subunit (28S) which comprises a 12S rRNA and about 30 distinct proteins.

It is found in the mitochondrion. The sequence is that of Large ribosomal subunit protein mL42 (Mrpl42) from Rattus norvegicus (Rat).